Here is a 253-residue protein sequence, read N- to C-terminus: MIKAVVFDAYGTLFDVQSVADATERAYPGRGEYITQVWRQKQLEYSWLRALMGRYADFWGVTREALAYTLGTLGLEPDESFLADMAQAYNRLTPYPDAAQCLAELAPLKRAILSNGAPDMLQALVANAGLTDSFDAVISVDAKRVFKPHPDSYALVEEVLGVTPAEVLFVSSNGFDVGGAKNFGFSVARVARLSQEALARELVSGTIAPLTMFKALRMREETYAEAPDFVVPALGDLPRLVRGMAGAHLAPAV.

The active-site Nucleophile is aspartate 8. An (S)-2-haloacid-binding positions include 9–10, arginine 39, and 114–115; these read AY and SN. Residues 171 to 176 are important for catalytic activity; sequence SSNGFD.

It belongs to the HAD-like hydrolase superfamily. S-2-haloalkanoic acid dehalogenase family. As to quaternary structure, homodimer.

The catalysed reaction is an (S)-2-haloacid + H2O = a (2R)-2-hydroxycarboxylate + a halide anion + H(+). It carries out the reaction (S)-2-chloropropanoate + H2O = (R)-lactate + chloride + H(+). Catalyzes the hydrolytic dehalogenation of small (S)-2-haloalkanoic acids to yield the corresponding (R)-2-hydroxyalkanoic acids. Acts on acids of short chain lengths, C(2) to C(4), with inversion of configuration at C-2. Active with 2-halogenated carboxylic acids and converts only the S-isomer (or L-isomer) of 2-chloropropionic acid with inversion of configuration to produce R-lactate (or D-isomer). The polypeptide is (S)-2-haloacid dehalogenase (Xanthobacter autotrophicus).